A 67-amino-acid chain; its full sequence is Conotoxin Cl6.6b (67 aa).

Residues 1–24 (MKLTCVLIAAVLLLAVCQLDSADA) form the signal peptide. Positions 25 to 37 (TGYMRKNPSLRSP) are excised as a propeptide. Cystine bridges form between Cys-43–Cys-57, Cys-50–Cys-61, and Cys-56–Cys-65.

It belongs to the conotoxin O1 superfamily. As to expression, expressed by the venom duct.

It is found in the secreted. The sequence is that of Conotoxin Cl6.6b from Californiconus californicus (California cone).